The chain runs to 361 residues: Allatostatin-A receptor (361 aa).

Residues 1–46 (MESTEDEFYTICLNLTAEDPSFGNCNYTTDFENGELLEKVVSRVVP) are Extracellular-facing. Residues N14 and N26 are each glycosylated (N-linked (GlcNAc...) asparagine). A helical transmembrane segment spans residues 47 to 67 (IFFGFIGIVGLVGNALVVLVV). Over 68-78 (AANPGMRSTTN) the chain is Cytoplasmic. The chain crosses the membrane as a helical span at residues 79 to 99 (LLIINLAVADLLFVIFCVPFT). Residues 100 to 116 (ATDYVMPRWPFGDWWCK) are Extracellular-facing. C115 and C196 are oxidised to a cystine. A helical transmembrane segment spans residues 117 to 137 (VVQYFIVVTAHASVYTLVLMS). At 138-158 (LDRFMAVVHPIASMSIRTEKN) the chain is on the cytoplasmic side. The chain crosses the membrane as a helical span at residues 159–179 (ALLAIACIWVVILTTAIPVGI). Residues 180 to 212 (CHGEREYSYFNRNHSSCVFLEERGYSKLGFQMS) are Extracellular-facing. A glycan (N-linked (GlcNAc...) asparagine) is linked at N192. Residues 213–233 (FFLSSYVIPLALISVLYMCML) traverse the membrane as a helical segment. The Cytoplasmic segment spans residues 234-259 (TRLWKSAPGGRVSAESRRGRKKVTRM). The helical transmembrane segment at 260–280 (VVVVVVVFAVCWCPIQIILLV) threads the bilayer. At 281-296 (KALNKYHITYFTVTAQ) the chain is on the extracellular side. Residues 297–317 (IVSHVLAYMNSCVNPVLYAFL) form a helical membrane-spanning segment. Over 318 to 361 (SENFRVAFRKVMYCPPPYNDGFSGRPQATKTTRTGNGNSCHDIV) the chain is Cytoplasmic. Positions 341-361 (GRPQATKTTRTGNGNSCHDIV) are disordered. The segment covering 343-361 (PQATKTTRTGNGNSCHDIV) has biased composition (polar residues).

This sequence belongs to the G-protein coupled receptor 1 family. Expressed in the midgut and, to a lesser extent, in the fore- and hindgut of fifth instar larvae. Also highly expressed in the brain of fourth and fifth instar larvae.

The protein localises to the cell membrane. Its function is as follows. Acts as a receptor for A-type allatostatin neuropeptide hormones. The protein is Allatostatin-A receptor of Bombyx mori (Silk moth).